The primary structure comprises 346 residues: Uroporphyrinogen decarboxylase (346 aa).

Residues 23-27, aspartate 72, tyrosine 149, threonine 204, and histidine 318 contribute to the substrate site; that span reads RQAGR.

Belongs to the uroporphyrinogen decarboxylase family. In terms of assembly, homodimer.

It localises to the cytoplasm. The catalysed reaction is uroporphyrinogen III + 4 H(+) = coproporphyrinogen III + 4 CO2. It participates in porphyrin-containing compound metabolism; protoporphyrin-IX biosynthesis; coproporphyrinogen-III from 5-aminolevulinate: step 4/4. Catalyzes the decarboxylation of four acetate groups of uroporphyrinogen-III to yield coproporphyrinogen-III. This chain is Uroporphyrinogen decarboxylase, found in Synechococcus sp. (strain JA-2-3B'a(2-13)) (Cyanobacteria bacterium Yellowstone B-Prime).